The chain runs to 278 residues: Orotidine 5'-phosphate decarboxylase (278 aa).

K96 acts as the Proton donor in catalysis.

It belongs to the OMP decarboxylase family. Type 2 subfamily.

It catalyses the reaction orotidine 5'-phosphate + H(+) = UMP + CO2. It participates in pyrimidine metabolism; UMP biosynthesis via de novo pathway; UMP from orotate: step 2/2. The protein is Orotidine 5'-phosphate decarboxylase (pyrF) of Streptomyces coelicolor (strain ATCC BAA-471 / A3(2) / M145).